A 383-amino-acid polypeptide reads, in one-letter code: Glycoprotein gp2 (383 aa).

The N-terminal stretch at 1–25 is a signal peptide; the sequence is MGFIYARKLLLCMAVSIYAIGSTTT. The segment covering 24–75 has biased composition (low complexity); the sequence is TTTETTTSSSSTSGSGQSTSSGTTNSSSSPTTSPPTTSSSPPTSTHTSSPST. The interval 24–136 is disordered; the sequence is TTTETTTSSS…RNNSIEIVPQ (113 aa). Asn48 carries N-linked (GlcNAc...) asparagine; by host glycosylation. A compositionally biased stretch (basic residues) spans 81-91; the sequence is HAGHHRGRAGG. Asn128 carries N-linked (GlcNAc...) asparagine; by host glycosylation. A helical membrane pass occupies residues 354–371; sequence LVAATTLTVTILCLLCCL.

Its subcellular location is the virion membrane. In terms of biological role, the glycoprotein gp2 from the avirulent strain Kentucky A (KyA) is probably non functional since this strain harbors an in-frame deletion of 1,242 nucleotides in gene 71. The protein is Glycoprotein gp2 (US4) of Equus caballus (Horse).